The sequence spans 463 residues: Glutamate--tRNA ligase 2 (463 aa).

A 'HIGH' region motif is present at residues 11–21 (PSPTGYLHIGG). The 'KMSKS' region motif lies at 240 to 244 (KLSKR). An ATP-binding site is contributed by lysine 243.

This sequence belongs to the class-I aminoacyl-tRNA synthetase family. Glutamate--tRNA ligase type 1 subfamily. Monomer.

Its subcellular location is the cytoplasm. It catalyses the reaction tRNA(Glu) + L-glutamate + ATP = L-glutamyl-tRNA(Glu) + AMP + diphosphate. In terms of biological role, catalyzes the attachment of glutamate to tRNA(Glu) in a two-step reaction: glutamate is first activated by ATP to form Glu-AMP and then transferred to the acceptor end of tRNA(Glu). The polypeptide is Glutamate--tRNA ligase 2 (Campylobacter jejuni (strain RM1221)).